Reading from the N-terminus, the 491-residue chain is Probable cytosol aminopeptidase (491 aa).

Positions 264 and 269 each coordinate Mn(2+). Lys-276 is a catalytic residue. 3 residues coordinate Mn(2+): Asp-287, Asp-346, and Glu-348. Residue Arg-350 is part of the active site.

The protein belongs to the peptidase M17 family. It depends on Mn(2+) as a cofactor.

The protein resides in the cytoplasm. It catalyses the reaction Release of an N-terminal amino acid, Xaa-|-Yaa-, in which Xaa is preferably Leu, but may be other amino acids including Pro although not Arg or Lys, and Yaa may be Pro. Amino acid amides and methyl esters are also readily hydrolyzed, but rates on arylamides are exceedingly low.. The catalysed reaction is Release of an N-terminal amino acid, preferentially leucine, but not glutamic or aspartic acids.. Functionally, presumably involved in the processing and regular turnover of intracellular proteins. Catalyzes the removal of unsubstituted N-terminal amino acids from various peptides. This Xylella fastidiosa (strain Temecula1 / ATCC 700964) protein is Probable cytosol aminopeptidase.